Reading from the N-terminus, the 197-residue chain is Nucleoside triphosphate pyrophosphatase (197 aa).

Catalysis depends on aspartate 71, which acts as the Proton acceptor.

The protein belongs to the Maf family. The cofactor is a divalent metal cation.

It localises to the cytoplasm. The catalysed reaction is a ribonucleoside 5'-triphosphate + H2O = a ribonucleoside 5'-phosphate + diphosphate + H(+). It carries out the reaction a 2'-deoxyribonucleoside 5'-triphosphate + H2O = a 2'-deoxyribonucleoside 5'-phosphate + diphosphate + H(+). In terms of biological role, nucleoside triphosphate pyrophosphatase. May have a dual role in cell division arrest and in preventing the incorporation of modified nucleotides into cellular nucleic acids. The sequence is that of Nucleoside triphosphate pyrophosphatase from Nostoc punctiforme (strain ATCC 29133 / PCC 73102).